Here is a 1347-residue protein sequence, read N- to C-terminus: G-protein coupled receptor-associated sorting protein 1 (1347 aa).

Disordered regions lie at residues 1-75, 145-174, and 188-281; these read MTRA…AYAK, ESIP…SWYR, and DFKW…NSRS. Over residues 21 to 33 the composition is skewed to low complexity; sequence ENANAAEVEPEAP. A compositionally biased stretch (basic residues) spans 211–226; the sequence is FRPRKSMKANNRFRHM. The span at 263–278 shows a compositional bias: basic and acidic residues; it reads PKDKTKVWSKPKEEPN. Ser295 is modified (phosphoserine). Disordered regions lie at residues 310–344, 364–396, and 460–485; these read GEEA…AMSG, FSKS…QEAR, and QVSS…SKSM. Basic residues predominate over residues 316–325; it reads RSKPRARKGV. Residues 370–396 show a composition bias toward basic and acidic residues; sequence KKEPRTRAVPKEEVKTKARASTKQEAR. Positions 461–484 are enriched in polar residues; it reads VSSFCLGSGKKSSMESGPKATSKS. A phosphoserine mark is found at Ser619 and Ser626. Thr860 is subject to Phosphothreonine. The residue at position 862 (Ser862) is a Phosphoserine.

This sequence belongs to the GPRASP family. Interacts with cytoplasmic tails of a variety of G-protein coupled receptors such as delta opioid receptor/OPRD1, beta-2 adrenergic receptor/ADRB2 and D4 dopamine receptor/DRD4 as well as D2 dopamine receptor/DRD2. Interacts with PER1. Interacts with BECN2; the interaction is direct. In terms of tissue distribution, expressed in the brain, with higher expression in the hippocampus, hypothalamus and olfactory bulb.

It is found in the cytoplasm. Modulates lysosomal sorting and functional down-regulation of a variety of G-protein coupled receptors. Targets receptors for degradation in lysosomes via its interaction with BECN2. The chain is G-protein coupled receptor-associated sorting protein 1 (Gprasp1) from Mus musculus (Mouse).